Consider the following 166-residue polypeptide: Ubiquitin-fold modifier-conjugating enzyme 1 (166 aa).

The Glycyl thioester intermediate role is filled by Cys116.

Belongs to the ubiquitin-conjugating enzyme family. UFC1 subfamily.

E2-like enzyme which forms an intermediate with UFM1 via a thioester linkage. The chain is Ubiquitin-fold modifier-conjugating enzyme 1 from Monosiga brevicollis (Choanoflagellate).